The primary structure comprises 243 residues: NAD(P)H-quinone oxidoreductase subunit K (243 aa).

[4Fe-4S] cluster contacts are provided by Cys-59, Cys-60, Cys-124, and Cys-155.

Belongs to the complex I 20 kDa subunit family. As to quaternary structure, NDH-1 can be composed of about 15 different subunits; different subcomplexes with different compositions have been identified which probably have different functions. The cofactor is [4Fe-4S] cluster.

Its subcellular location is the cellular thylakoid membrane. It carries out the reaction a plastoquinone + NADH + (n+1) H(+)(in) = a plastoquinol + NAD(+) + n H(+)(out). It catalyses the reaction a plastoquinone + NADPH + (n+1) H(+)(in) = a plastoquinol + NADP(+) + n H(+)(out). Functionally, NDH-1 shuttles electrons from an unknown electron donor, via FMN and iron-sulfur (Fe-S) centers, to quinones in the respiratory and/or the photosynthetic chain. The immediate electron acceptor for the enzyme in this species is believed to be plastoquinone. Couples the redox reaction to proton translocation, and thus conserves the redox energy in a proton gradient. Cyanobacterial NDH-1 also plays a role in inorganic carbon-concentration. This chain is NAD(P)H-quinone oxidoreductase subunit K, found in Picosynechococcus sp. (strain ATCC 27264 / PCC 7002 / PR-6) (Agmenellum quadruplicatum).